We begin with the raw amino-acid sequence, 181 residues long: I-Kappa-B like protein C2 (181 aa).

3 ANK repeats span residues 54 to 86 (DGKXCMHIVVSQDKVDPINKLMLLMKWGADINS), 91 to 121 (DGNTVLHIAVLTNNYEVAKWLCQQPGVDMEI), and 125 to 154 (ARKTPYQIACDRANTRMMDLLXKNGARCDV).

This sequence belongs to the polydnaviridae I-Kappa-B-like protein family.

Functionally, suppresses the host immune response through NF-kappa-B inactivation. Possesses ankyrin repeat domains required for NF-kappa-B binding but lacks the regulatory regions required for dissociation from NF-kappa-B and degradation. Therefore, prevents host NF-kappa-B release and subsequent activation. This chain is I-Kappa-B like protein C2 (C2), found in Microplitis demolitor (Parasitoid wasp).